The sequence spans 310 residues: MKTLIRKFSRTAITVVLVILAFIAIFNAWVYYTESPWTRDARFSADVVAIAPDVSGLITQVNVHDNQLVKKGQVLFTIDQPRYQKALEEAQADVAYYQVLAQEKRQEAGRRNRLGVQAMSREEIDQANNVLQTVLHQLAKAQATRDLAKLDLERTVIRAPADGWVTNLNVYTGEFITRGSTAVALVKQNSFYVLAYMEETKLEGVRPGYRAEITPLGSNKVLKGTVDSVAAGVTNASSTRDDKGMATIDSNLEWVRLAQRVPVRIRLDNQQENIWPAGTTATVVVTGKQDRDESQDSFFRKMAHRLREFG.

A helical membrane pass occupies residues 12–32 (AITVVLVILAFIAIFNAWVYY).

This sequence belongs to the membrane fusion protein (MFP) (TC 8.A.1) family.

The protein resides in the cell inner membrane. Functionally, forms an efflux pump with AaeB. This Escherichia coli O127:H6 (strain E2348/69 / EPEC) protein is p-hydroxybenzoic acid efflux pump subunit AaeA.